Here is an 845-residue protein sequence, read N- to C-terminus: Beta-galactosidase 11 (845 aa).

A signal peptide spans methionine 1 to alanine 26. Asparagine 104 carries an N-linked (GlcNAc...) asparagine glycan. Glutamate 197 functions as the Proton donor in the catalytic mechanism. Glutamate 268 acts as the Nucleophile in catalysis. Asparagine 269, asparagine 300, asparagine 395, asparagine 752, asparagine 784, and asparagine 814 each carry an N-linked (GlcNAc...) asparagine glycan. Residues aspartate 751 to glycine 840 form the SUEL-type lectin domain.

Belongs to the glycosyl hydrolase 35 family.

It is found in the secreted. The protein resides in the extracellular space. It localises to the apoplast. It catalyses the reaction Hydrolysis of terminal non-reducing beta-D-galactose residues in beta-D-galactosides.. This Arabidopsis thaliana (Mouse-ear cress) protein is Beta-galactosidase 11 (BGAL11).